Reading from the N-terminus, the 171-residue chain is Adenine phosphoribosyltransferase (171 aa).

Belongs to the purine/pyrimidine phosphoribosyltransferase family. As to quaternary structure, homodimer.

It localises to the cytoplasm. The catalysed reaction is AMP + diphosphate = 5-phospho-alpha-D-ribose 1-diphosphate + adenine. Its pathway is purine metabolism; AMP biosynthesis via salvage pathway; AMP from adenine: step 1/1. Its function is as follows. Catalyzes a salvage reaction resulting in the formation of AMP, that is energically less costly than de novo synthesis. The sequence is that of Adenine phosphoribosyltransferase from Gloeobacter violaceus (strain ATCC 29082 / PCC 7421).